A 404-amino-acid polypeptide reads, in one-letter code: MKIPIYMDYHATTPVDRRVLEAMLPYFAEDFGNAASKSHAFGWRAEEAVEAAREEVARLVGASAKEIVWTSGATESDNLAVKGAAQFYQSKGKHLVTCKTEHKAVLDSMHALERQGFEVTFLDVEKDGRLDPARLRAALREDTILVSIMHANNETGVVHPIEEIGRITRAAGVLFHCDAVQSAGKLPFDVEDANVDLASLSAHKMYGPKGVGALYVRRKPRVRLIAQMDGGGHERGFRSGTLNVPGIVGFGKAAELARLEGAAEAERVLALRERLRKGLDAGLDLLTVNGSLAHRVPGNLNVSFAYVEGEALMMAIKDVAVSSGSACTSASLEPSYVLRAMGISEDLAHSSIRFGLGRFTTEEEVDHVVRLVVEKVRKLREMSPLYEMVKEGVDLSQIEWANPH.

Residues 73–74, N153, Q181, and 201–203 contribute to the pyridoxal 5'-phosphate site; these read AT and SAH. At K204 the chain carries N6-(pyridoxal phosphate)lysine. T241 contacts pyridoxal 5'-phosphate. C327 serves as the catalytic Cysteine persulfide intermediate. C327 provides a ligand contact to [2Fe-2S] cluster.

This sequence belongs to the class-V pyridoxal-phosphate-dependent aminotransferase family. NifS/IscS subfamily. In terms of assembly, homodimer. Forms a heterotetramer with IscU, interacts with other sulfur acceptors. The cofactor is pyridoxal 5'-phosphate.

It localises to the cytoplasm. It carries out the reaction (sulfur carrier)-H + L-cysteine = (sulfur carrier)-SH + L-alanine. It participates in cofactor biosynthesis; iron-sulfur cluster biosynthesis. In terms of biological role, master enzyme that delivers sulfur to a number of partners involved in Fe-S cluster assembly, tRNA modification or cofactor biosynthesis. Catalyzes the removal of elemental sulfur atoms from cysteine to produce alanine. Functions as a sulfur delivery protein for Fe-S cluster synthesis onto IscU, an Fe-S scaffold assembly protein, as well as other S acceptor proteins. The protein is Cysteine desulfurase IscS of Anaeromyxobacter sp. (strain Fw109-5).